A 341-amino-acid chain; its full sequence is D-erythrose-4-phosphate dehydrogenase (341 aa).

An NAD(+)-binding site is contributed by 14–15; it reads RI. Residues 156–158, arginine 202, 215–216, and arginine 238 contribute to the substrate site; these read SCT and TR. Cysteine 157 (nucleophile) is an active-site residue. Residue asparagine 320 coordinates NAD(+).

It belongs to the glyceraldehyde-3-phosphate dehydrogenase family. Epd subfamily. In terms of assembly, homotetramer.

It is found in the cytoplasm. It carries out the reaction D-erythrose 4-phosphate + NAD(+) + H2O = 4-phospho-D-erythronate + NADH + 2 H(+). The protein operates within cofactor biosynthesis; pyridoxine 5'-phosphate biosynthesis; pyridoxine 5'-phosphate from D-erythrose 4-phosphate: step 1/5. In terms of biological role, catalyzes the NAD-dependent conversion of D-erythrose 4-phosphate to 4-phosphoerythronate. The chain is D-erythrose-4-phosphate dehydrogenase from Idiomarina loihiensis (strain ATCC BAA-735 / DSM 15497 / L2-TR).